The chain runs to 723 residues: Hypoxia-inducible factor prolyl hydroxylase (723 aa).

Zn(2+)-binding residues include C39, C42, C54, C57, C63, H67, H75, and C79. The segment at 39-79 (CTYCGSSCTSSQLQTCLFCGTVAYCSKEHQQLDWLTHKMIC) adopts an MYND-type; atypical zinc-finger fold. Over residues 249-270 (PSTASTATIPPPATTTSSATSS) the composition is skewed to low complexity. Disordered regions lie at residues 249–275 (PSTASTATIPPPATTTSSATSSGKSET) and 294–323 (IETEGGSKPTVSRTRKRPTPSNSADPKINY). A Fe2OG dioxygenase domain is found at 468 to 566 (GRSRAMLAIY…RFAITIWYMD (99 aa)). Fe cation-binding residues include H487, D489, and H548. R557 lines the 2-oxoglutarate pocket. Positions 678–723 (RTTSLQSISDHFRSERSHERRSSTSSDQDLDEGLPPPPSTNPEYYI) are disordered. The span at 687–699 (DHFRSERSHERRS) shows a compositional bias: basic and acidic residues.

In terms of assembly, interacts (via catalytic domain) with lin-10 (via N-terminus); the interaction regulates lin-10 subcellular localization; the interaction is direct. Interacts (via catalytic domain) with swan-1 (via WD 1-3 repeats); the interaction may regulate vhl-1-independent hif-1 transcriptional activity; the interaction is direct. Interacts (via C-terminus) with cysl-1; the interaction is enhanced by hydrogen disulfide and activates hif-1-mediated transcription; the interaction is direct. Fe(2+) is required as a cofactor. Requires L-ascorbate as cofactor. In larvae and adults, expressed in pharyngeal and body wall muscles.

Its subcellular location is the cytoplasm. It is found in the nucleus. The protein resides in the cell projection. The protein localises to the dendrite. It localises to the axon. It catalyses the reaction L-prolyl-[hypoxia-inducible factor alpha subunit] + 2-oxoglutarate + O2 = trans-4-hydroxy-L-prolyl-[hypoxia-inducible factor alpha subunit] + succinate + CO2. Inhibited by Co(2+) and dimethyloxalylglycine. Inhibited by the iron chelator 2, 2'-dipyridyl. In terms of biological role, cellular oxygen sensor which regulates the stability and the activity of hypoxia-inducible transcription factor, hif-1. In normoxic conditions, hydroxylates hif-1 targeting it for vhl-1-mediated proteasomal degradation. In addition, regulates hif-1 transcriptional activity in a vhl-1-independent manner and independently of its hydroxylase activity. By regulating hif-1 activity, controls several cellular responses. Mediates susceptibility to B.thuringiensis and V.cholerae pore-forming toxins and enteropathogenic E.coli. Mediates susceptibility to P.aeruginosa PAO1-mediated killing by regulating resistance to cyanide produced by P.aeruginosa. Mediates resistance to S.aureus-mediated killing. In addition, plays a role in heat acclimation, neuronal development, behavioral responses to reoxygenation and hydrogen sulfide, iron homeostasis and aging. In neurons, involved in mitochondrion fusion during reoxygenation. Involved in egg laying. Functionally, regulates the trafficking of the glutamate receptor glr-1, probably independently of hif-1, by regulating lin-10 subcellular localization in response to oxygen levels. May hydroxylate lin-10. This Caenorhabditis elegans protein is Hypoxia-inducible factor prolyl hydroxylase.